A 157-amino-acid polypeptide reads, in one-letter code: Arginine repressor (157 aa).

Belongs to the ArgR family.

It localises to the cytoplasm. It functions in the pathway amino-acid biosynthesis; L-arginine biosynthesis [regulation]. Its function is as follows. Regulates arginine biosynthesis genes. The sequence is that of Arginine repressor from Deinococcus deserti (strain DSM 17065 / CIP 109153 / LMG 22923 / VCD115).